The following is a 642-amino-acid chain: Threonine--tRNA ligase (642 aa).

Residues 1–63 enclose the TGS domain; it reads MSEIVVTLPD…TDDCELVIVT (63 aa). The interval 242 to 533 is catalytic; the sequence is DHRKLGQELD…LIEHFDGNFP (292 aa). Residues C334, H385, and H510 each coordinate Zn(2+).

This sequence belongs to the class-II aminoacyl-tRNA synthetase family. In terms of assembly, homodimer. Requires Zn(2+) as cofactor.

It localises to the cytoplasm. It catalyses the reaction tRNA(Thr) + L-threonine + ATP = L-threonyl-tRNA(Thr) + AMP + diphosphate + H(+). In terms of biological role, catalyzes the attachment of threonine to tRNA(Thr) in a two-step reaction: L-threonine is first activated by ATP to form Thr-AMP and then transferred to the acceptor end of tRNA(Thr). This is Threonine--tRNA ligase from Natronomonas pharaonis (strain ATCC 35678 / DSM 2160 / CIP 103997 / JCM 8858 / NBRC 14720 / NCIMB 2260 / Gabara) (Halobacterium pharaonis).